Here is a 91-residue protein sequence, read N- to C-terminus: Small ubiquitin-related modifier (91 aa).

The 79-residue stretch at 13 to 91 (EYIKIKVVGQ…EVYQEQLGGF (79 aa)) folds into the Ubiquitin-like domain. Gly90 participates in a covalent cross-link: Glycyl lysine isopeptide (Gly-Lys) (interchain with K-? in acceptor proteins). Phe91 is a propeptide.

It belongs to the ubiquitin family. SUMO subfamily. In terms of assembly, covalently attached to tbx-2. Covalently attached to lin-1. Covalently attached to lin-11. Covalently attached to sop-2. Covalently attached to bet-1. In terms of processing, cleavage of precursor form by ulp-1 is necessary for function.

Its subcellular location is the cytoplasm. It is found in the nucleus. The protein localises to the cytoskeleton. It localises to the spindle. The protein resides in the chromosome. Its subcellular location is the microtubule organizing center. It is found in the centrosome. Its function is as follows. Ubiquitin-like protein which can be covalently attached to target lysines as a monomer. Does not seem to be involved in protein degradation and may function as an antagonist of ubiquitin in the degradation process. Plays a role in a number of cellular processes such as nuclear transport, DNA replication and repair, mitosis and signal transduction. Covalent attachment to its substrates requires prior activation by the E1 complex aos-1-uba-2 and linkage to the E2 enzyme ubc-9, and can be promoted by an E3 ligase such as gei-17. Required for embryonic development, fertility, vulval morphogenesis and inhibition of vulval cell fates. Probably by sumoylating bet-1, prevents muscle myosin depletion in aging adults probably by preventing myoblast growth factor receptor egl-15 overexpression. Plays a role in the attenuation of the let-60/ras pathway. Plays a role in male tail tip morphogenesis. Plays a role in the mitochondrial stress response with its covalent attachment to transcription factors dve-1 and afts-1 negatively regulating the mitochondrial unfolded protein response. The chain is Small ubiquitin-related modifier from Caenorhabditis elegans.